The following is a 557-amino-acid chain: Membrane protein insertase YidC (557 aa).

Residues 1–21 (MNWLRNSLIAAILVITYVLFI) traverse the membrane as a helical segment. The tract at residues 52-71 (SDDAVASSATEESDVPEVSV) is disordered. Transmembrane regions (helical) follow at residues 346–366 (TIDY…LDFI), 369–389 (LVGN…AVFF), 439–459 (FGGC…YWMI), 470–490 (FFLW…PLLM), and 517–537 (PIGF…YWVV).

The protein belongs to the OXA1/ALB3/YidC family. Type 1 subfamily. In terms of assembly, interacts with the Sec translocase complex via SecD. Specifically interacts with transmembrane segments of nascent integral membrane proteins during membrane integration.

The protein resides in the cell inner membrane. Its function is as follows. Required for the insertion and/or proper folding and/or complex formation of integral membrane proteins into the membrane. Involved in integration of membrane proteins that insert both dependently and independently of the Sec translocase complex, as well as at least some lipoproteins. Aids folding of multispanning membrane proteins. This chain is Membrane protein insertase YidC, found in Saccharophagus degradans (strain 2-40 / ATCC 43961 / DSM 17024).